The following is a 323-amino-acid chain: tRNA U34 carboxymethyltransferase (323 aa).

Residues lysine 91, tryptophan 105, lysine 110, glycine 130, 152 to 154, 181 to 182, methionine 196, tyrosine 200, and arginine 315 each bind carboxy-S-adenosyl-L-methionine; these read DPT and IE.

The protein belongs to the class I-like SAM-binding methyltransferase superfamily. CmoB family. In terms of assembly, homotetramer.

The catalysed reaction is carboxy-S-adenosyl-L-methionine + 5-hydroxyuridine(34) in tRNA = 5-carboxymethoxyuridine(34) in tRNA + S-adenosyl-L-homocysteine + H(+). Catalyzes carboxymethyl transfer from carboxy-S-adenosyl-L-methionine (Cx-SAM) to 5-hydroxyuridine (ho5U) to form 5-carboxymethoxyuridine (cmo5U) at position 34 in tRNAs. The sequence is that of tRNA U34 carboxymethyltransferase from Shigella flexneri.